Reading from the N-terminus, the 783-residue chain is Tricorn protease-interacting factor F2 (783 aa).

Substrate-binding positions include Glu107 and 236-240 (GAMEN). A Zn(2+)-binding site is contributed by His271. Residue Glu272 is the Proton acceptor of the active site. Zn(2+) is bound by residues His275 and Glu294.

The protein belongs to the peptidase M1 family. In terms of assembly, monomer. Part of the Tricorn proteolytic complex. Requires Zn(2+) as cofactor.

It localises to the cytoplasm. Its function is as follows. Proteases F1, F2 and F3 degrade oligopeptides produced by Tricorn (themselves probably produced by the proteasome), yielding free amino acids. The polypeptide is Tricorn protease-interacting factor F2 (trf2) (Thermoplasma volcanium (strain ATCC 51530 / DSM 4299 / JCM 9571 / NBRC 15438 / GSS1)).